Consider the following 349-residue polypeptide: tRNA pseudouridine synthase D (349 aa).

Phenylalanine 27 is a binding site for substrate. Aspartate 80 (nucleophile) is an active-site residue. Asparagine 129 serves as a coordination point for substrate. Positions 155-303 constitute a TRUD domain; the sequence is GVPNYFGAQR…VEASRRAMLL (149 aa). Phenylalanine 329 provides a ligand contact to substrate.

This sequence belongs to the pseudouridine synthase TruD family.

It carries out the reaction uridine(13) in tRNA = pseudouridine(13) in tRNA. Its function is as follows. Responsible for synthesis of pseudouridine from uracil-13 in transfer RNAs. This chain is tRNA pseudouridine synthase D, found in Salmonella choleraesuis (strain SC-B67).